The sequence spans 1829 residues: Protein TIC 214 (1829 aa).

The next 6 helical transmembrane spans lie at 18 to 38 (IINS…FSIG), 67 to 87 (FIAG…HLAL), 90 to 110 (PHTI…WNNP), 127 to 147 (LSIQ…HFLL), 174 to 194 (FVGW…VLVW), and 224 to 244 (IFSI…PSPI). Over residues 260 to 272 (RDVEIEKTFERGG) the composition is skewed to basic and acidic residues. The disordered stretch occupies residues 260–301 (RDVEIEKTFERGGTKQGQEVSAEEDPSPSLFSEEKEDPDKIE).

This sequence belongs to the TIC214 family. In terms of assembly, part of the Tic complex.

Its subcellular location is the plastid. The protein resides in the chloroplast inner membrane. In terms of biological role, involved in protein precursor import into chloroplasts. May be part of an intermediate translocation complex acting as a protein-conducting channel at the inner envelope. The polypeptide is Protein TIC 214 (Citrus sinensis (Sweet orange)).